The primary structure comprises 90 residues: Non-structural protein NS-S (90 aa).

Residues 4-29 form a nucleolar signal region; it reads KLSLPGKNLKMQKRRWKPTRMMLTRA.

Belongs to the hantavirus NS-S protein family. As to quaternary structure, interacts with host MAVS; this interaction may reduce MAVS ubiquitination.

The protein resides in the host cytoplasm. Its subcellular location is the host perinuclear region. It is found in the host nucleus. Antagonizes host type-I IFN signaling pathway. This chain is Non-structural protein NS-S (N), found in Homo sapiens (Human).